We begin with the raw amino-acid sequence, 208 residues long: Interferon epsilon (208 aa).

A signal peptide spans 1 to 21 (MIIKHFFGTVLVLLASTTIFS). A disulfide bridge links cysteine 53 with cysteine 163. Asparagine 95 and asparagine 104 each carry an N-linked (GlcNAc...) asparagine glycan.

Belongs to the alpha/beta interferon family. Endometrium-specific.

It is found in the secreted. Its function is as follows. Type I interferon required for maintaining basal levels of IFN-regulated genes, including 2'-5'-oligoadenylate synthetase, IRF7 and ISG15, in the female reproductive tract. Directly mediates protection against viral and bacterial genital infections. This Homo sapiens (Human) protein is Interferon epsilon (IFNE).